The following is a 312-amino-acid chain: Olfactory receptor 8K3 (312 aa).

The Extracellular portion of the chain corresponds to 1–25 (MEQHNLTTVNEFILTGITDIAELQA). N-linked (GlcNAc...) asparagine glycosylation is present at asparagine 5. The chain crosses the membrane as a helical span at residues 26 to 46 (PLFALFLMIYVISVMGNLGMI). Over 47–54 (VLTKLDSR) the chain is Cytoplasmic. Residues 55–75 (LQTPMYFFLRHLAFMDLGYST) traverse the membrane as a helical segment. The Extracellular portion of the chain corresponds to 76-99 (TVGPKMLVNFVVDKNIISYYFCAT). Cysteine 97 and cysteine 189 are oxidised to a cystine. The helical transmembrane segment at 100–120 (QLAFFLVFIGSELFILSAMSY) threads the bilayer. Residues 121-139 (DLYVAICNPLLYTVIMSRR) lie on the Cytoplasmic side of the membrane. Residues 140 to 160 (VCQVLVAIPYLYCTFISLLVT) form a helical membrane-spanning segment. Residues 161–197 (IKIFTLSFCGYNVISHFYCDSLPLLPLLCSNTHEIEL) lie on the Extracellular side of the membrane. The chain crosses the membrane as a helical span at residues 198–217 (IILIFAAIDLISSLLIVLLS). Over 218–236 (YLLILVAILRMNSAGRQKA) the chain is Cytoplasmic. A helical membrane pass occupies residues 237–257 (FSTCGAHLTVVIVFYGTLLFM). Residues 258-270 (YVQPKSSHSFDTD) lie on the Extracellular side of the membrane. The helical transmembrane segment at 271–291 (KVASIFYTLVIPMLNPLIYSL) threads the bilayer. Over 292-312 (RNKDVKYALRRTWNNLCNIFV) the chain is Cytoplasmic.

It belongs to the G-protein coupled receptor 1 family.

The protein localises to the cell membrane. In terms of biological role, odorant receptor. The polypeptide is Olfactory receptor 8K3 (OR8K3) (Homo sapiens (Human)).